The primary structure comprises 911 residues: ATP-dependent DNA helicase Q-like 5 (911 aa).

Residues 1–84 (MDFDSDSDGS…PPPSPLFTNL (84 aa)) are disordered. Positions 20-48 (SFPSSPPQLQSPAKHVPPVSRKMTSSSSR) are enriched in low complexity. Positions 54 to 79 (PTHPPPNPSQEAPVPSPYPPPPPPSP) are enriched in pro residues. A Helicase ATP-binding domain is found at 278 to 448 (IKMILGGSST…MSSLEIPSTN (171 aa)). 291-298 (LPTGAGKS) serves as a coordination point for ATP. The short motif at 390 to 393 (DEAH) is the DEAH box element. A Helicase C-terminal domain is found at 470-628 (RMKDLLILME…VFSTETKQHE (159 aa)).

It belongs to the helicase family. RecQ subfamily. As to expression, mostly expressed in roots, seedlings, shoots, shoot apical mersitem, flowers, and siliques.

The protein localises to the nucleus. It catalyses the reaction Couples ATP hydrolysis with the unwinding of duplex DNA by translocating in the 3'-5' direction.. It carries out the reaction ATP + H2O = ADP + phosphate + H(+). Functionally, 3'-5' DNA helicase that may play a role in the repair of DNA. This Arabidopsis thaliana (Mouse-ear cress) protein is ATP-dependent DNA helicase Q-like 5 (RECQL5).